The primary structure comprises 69 residues: VLIIAVLFLTACQLTTAETYSRGRQKHRARRSTDKNSKWTRECTRSGGACYSHNQCCDDFCSTATSTCI.

A signal peptide spans 1–17 (VLIIAVLFLTACQLTTA). Residues 18–41 (ETYSRGRQKHRARRSTDKNSKWTR) constitute a propeptide that is removed on maturation. 3 disulfides stabilise this stretch: Cys43-Cys57, Cys50-Cys61, and Cys56-Cys68.

It belongs to the conotoxin O1 superfamily. In terms of tissue distribution, expressed by the venom duct.

The protein localises to the secreted. This Conus ebraeus (Hebrew cone) protein is Conotoxin Eb6.21 (E1).